Consider the following 1535-residue polypeptide: Putative protein TIC 214 C-terminal part (1535 aa).

Disordered stretches follow at residues 264–283 (ENQK…NSND), 312–333 (EQQE…SRKA), and 1263–1282 (DYKE…KNNK).

This sequence belongs to the TIC214 family. Part of the Tic complex.

The protein localises to the plastid. Its subcellular location is the chloroplast. Involved in protein precursor import into chloroplasts. May be part of an intermediate translocation complex acting as a protein-conducting channel at the inner envelope. The polypeptide is Putative protein TIC 214 C-terminal part (Piper cenocladum (Ant piper)).